Reading from the N-terminus, the 482-residue chain is ATP synthase subunit beta (482 aa).

ATP is bound at residue 162 to 169 (GGAGVGKT).

The protein belongs to the ATPase alpha/beta chains family. F-type ATPases have 2 components, CF(1) - the catalytic core - and CF(0) - the membrane proton channel. CF(1) has five subunits: alpha(3), beta(3), gamma(1), delta(1), epsilon(1). CF(0) has four main subunits: a(1), b(1), b'(1) and c(9-12).

The protein localises to the cellular thylakoid membrane. It catalyses the reaction ATP + H2O + 4 H(+)(in) = ADP + phosphate + 5 H(+)(out). Functionally, produces ATP from ADP in the presence of a proton gradient across the membrane. The catalytic sites are hosted primarily by the beta subunits. The polypeptide is ATP synthase subunit beta (Trichormus variabilis (strain ATCC 29413 / PCC 7937) (Anabaena variabilis)).